Reading from the N-terminus, the 506-residue chain is Peptidyl-prolyl cis-trans isomerase CYP59 (506 aa).

In terms of domain architecture, PPIase cyclophilin-type spans methionine 1–isoleucine 161. An RRM domain is found at asparagine 243–serine 321. The segment at glycine 341–glycine 357 adopts a CCHC-type zinc-finger fold. 2 stretches are compositionally biased toward basic and acidic residues: residues glutamate 388 to glutamine 404 and glycine 412 to arginine 506. The segment at glutamate 388 to arginine 506 is disordered.

It belongs to the cyclophilin-type PPIase family. Component of the BZR1 complex. Interacts with NRPB1 (via CTD domain), SCL28, SCL30, SCL30A, SCL33, SC35, SR30, SR34, RSZ21, RS2Z33, RS31 and RS40. Ubiquitous.

It localises to the nucleus. It catalyses the reaction [protein]-peptidylproline (omega=180) = [protein]-peptidylproline (omega=0). In terms of biological role, PPIases accelerate the folding of proteins. It catalyzes the cis-trans isomerization of proline imidic peptide bonds in oligopeptides. Influences somehow regulation of RNA pol II (CTD) phosphorylation. Binds RNA with preferences for GC-rich sequences. Probably involved in activities connecting transcription and pre-mRNA processing. Involved in brassinostroid response. The sequence is that of Peptidyl-prolyl cis-trans isomerase CYP59 (CYP59) from Arabidopsis thaliana (Mouse-ear cress).